Reading from the N-terminus, the 239-residue chain is LexA repressor (239 aa).

A DNA-binding region (H-T-H motif) is located at residues 26 to 46; sequence FDEMKDALDLASKSGIHRLIT. Catalysis depends on for autocatalytic cleavage activity residues Ser159 and Lys197.

The protein belongs to the peptidase S24 family. Homodimer.

It carries out the reaction Hydrolysis of Ala-|-Gly bond in repressor LexA.. Functionally, represses a number of genes involved in the response to DNA damage (SOS response), including recA and lexA. In the presence of single-stranded DNA, RecA interacts with LexA causing an autocatalytic cleavage which disrupts the DNA-binding part of LexA, leading to derepression of the SOS regulon and eventually DNA repair. This chain is LexA repressor, found in Allorhizobium ampelinum (strain ATCC BAA-846 / DSM 112012 / S4) (Agrobacterium vitis (strain S4)).